Here is a 38-residue protein sequence, read N- to C-terminus: NAD-reducing hydrogenase HoxS subunit beta (38 aa).

This sequence belongs to the [NiFe]/[NiFeSe] hydrogenase large subunit family. Tetramer of an alpha and a gamma subunits (flavin-containing dimer), and a delta and a nickel-containing beta subunits (hydrogenase dimer). FMN serves as cofactor. The cofactor is Ni(2+).

Its subcellular location is the cytoplasm. It carries out the reaction H2 + NAD(+) = NADH + H(+). The chain is NAD-reducing hydrogenase HoxS subunit beta (hoxH) from Rhodococcus opacus (Nocardia opaca).